We begin with the raw amino-acid sequence, 129 residues long: N16.5 matrix protein (129 aa).

Residues 1 to 23 (MTCTLRWTITALVLLGICHLARP) form the signal peptide. Repeat copies occupy residues 91–92 (NG), 93–94 (NG), 95–96 (NG), 97–98 (NG), and 99–100 (NG). The tract at residues 91–100 (NGNGNGNGNG) is 5 X 2 AA tandem repeats of N-G.

Belongs to the N16 matrix protein family. Heterooligomer; disulfide-linked. Pif97, Pif80, N16 and other proteins form a complex. In terms of tissue distribution, component of conchiolin, the organic matrix of nacre. Specifically expressed in mantle epithelium.

It localises to the secreted. The protein resides in the extracellular space. The protein localises to the extracellular matrix. Its function is as follows. May be specifically involved in the formation of the nacreous layer. This is N16.5 matrix protein from Pinctada fucata (Akoya pearl oyster).